The chain runs to 438 residues: Aspartate--tRNA(Asp/Asn) ligase (438 aa).

Glu176 is an L-aspartate binding site. Residues 198 to 201 form an aspartate region; that stretch reads QLYK. Arg220 contributes to the L-aspartate binding site. ATP is bound by residues 220-222, 228-230, and Glu361; these read RAE and RHL. Positions 361 and 364 each coordinate Mg(2+). 2 residues coordinate L-aspartate: Ser364 and Arg368. 409–412 contributes to the ATP binding site; the sequence is GADR.

This sequence belongs to the class-II aminoacyl-tRNA synthetase family. Type 2 subfamily. Homodimer. The cofactor is Mg(2+).

Its subcellular location is the cytoplasm. It carries out the reaction tRNA(Asx) + L-aspartate + ATP = L-aspartyl-tRNA(Asx) + AMP + diphosphate. In terms of biological role, aspartyl-tRNA synthetase with relaxed tRNA specificity since it is able to aspartylate not only its cognate tRNA(Asp) but also tRNA(Asn). Reaction proceeds in two steps: L-aspartate is first activated by ATP to form Asp-AMP and then transferred to the acceptor end of tRNA(Asp/Asn). This Methanococcus vannielii (strain ATCC 35089 / DSM 1224 / JCM 13029 / OCM 148 / SB) protein is Aspartate--tRNA(Asp/Asn) ligase.